The chain runs to 1151 residues: Nardilysin (1151 aa).

Positions 1-20 (MLRRVTVAAVCATRRKLCEA) are cleaved as a signal peptide. 2 disordered regions span residues 53–108 (RNKA…KSPS) and 133–207 (MEGK…KKTT). A phosphoserine mark is found at Ser86, Ser94, and Ser96. Over residues 141 to 198 (TDDEEEEEVEEEEEDDDEDSGAEIEDDDEEGFDDEDEFDDEHDDDLDTEDNELEELEE) the composition is skewed to acidic residues. His233 provides a ligand contact to Zn(2+). Glu236 acts as the Proton acceptor in catalysis. Zn(2+)-binding residues include His237 and Glu314.

Belongs to the peptidase M16 family. Interacts with BACE1 and NRG1. Zn(2+) is required as a cofactor. In terms of tissue distribution, primarily in adult heart, skeletal muscle, and testis and at much lower levels in other tissues.

It localises to the mitochondrion. The protein localises to the cell projection. The protein resides in the dendrite. It carries out the reaction Hydrolysis of polypeptides, preferably at -Xaa-|-Arg-Lys-, and less commonly at -Arg-|-Arg-Xaa-, in which Xaa is not Arg or Lys.. Functionally, cleaves peptide substrates on the N-terminus of arginine residues in dibasic pairs. Is a critical activator of BACE1- and ADAM17-mediated pro-neuregulin ectodomain shedding, involved in the positive regulation of axonal maturation and myelination. Required for proper functioning of 2-oxoglutarate dehydrogenase (OGDH). The chain is Nardilysin from Homo sapiens (Human).